A 103-amino-acid polypeptide reads, in one-letter code: Pyrimidine/purine nucleoside phosphorylase (103 aa).

This sequence belongs to the nucleoside phosphorylase PpnP family.

It catalyses the reaction a purine D-ribonucleoside + phosphate = a purine nucleobase + alpha-D-ribose 1-phosphate. The enzyme catalyses adenosine + phosphate = alpha-D-ribose 1-phosphate + adenine. It carries out the reaction cytidine + phosphate = cytosine + alpha-D-ribose 1-phosphate. The catalysed reaction is guanosine + phosphate = alpha-D-ribose 1-phosphate + guanine. It catalyses the reaction inosine + phosphate = alpha-D-ribose 1-phosphate + hypoxanthine. The enzyme catalyses thymidine + phosphate = 2-deoxy-alpha-D-ribose 1-phosphate + thymine. It carries out the reaction uridine + phosphate = alpha-D-ribose 1-phosphate + uracil. The catalysed reaction is xanthosine + phosphate = alpha-D-ribose 1-phosphate + xanthine. Its function is as follows. Catalyzes the phosphorolysis of diverse nucleosides, yielding D-ribose 1-phosphate and the respective free bases. Can use uridine, adenosine, guanosine, cytidine, thymidine, inosine and xanthosine as substrates. Also catalyzes the reverse reactions. This is Pyrimidine/purine nucleoside phosphorylase from Shewanella baltica (strain OS195).